Here is a 156-residue protein sequence, read N- to C-terminus: Small ribosomal subunit protein uS7 (156 aa).

The protein belongs to the universal ribosomal protein uS7 family. As to quaternary structure, part of the 30S ribosomal subunit. Contacts proteins S9 and S11.

Functionally, one of the primary rRNA binding proteins, it binds directly to 16S rRNA where it nucleates assembly of the head domain of the 30S subunit. Is located at the subunit interface close to the decoding center, probably blocks exit of the E-site tRNA. In Pseudomonas aeruginosa (strain LESB58), this protein is Small ribosomal subunit protein uS7.